Consider the following 413-residue polypeptide: Protein SLX4IP (413 aa).

Residues Lys61, Lys79, Lys167, Lys176, and Lys236 each participate in a glycyl lysine isopeptide (Lys-Gly) (interchain with G-Cter in SUMO2) cross-link. Disordered stretches follow at residues Arg172–Ser193 and Ser228–Glu300. The span at Glu238 to Leu254 shows a compositional bias: polar residues. Glycyl lysine isopeptide (Lys-Gly) (interchain with G-Cter in SUMO2) cross-links involve residues Lys288, Lys344, and Lys353. The segment at Ser363 to Asn413 is disordered. Over residues Ser364 to Thr389 the composition is skewed to polar residues. Position 389 is a phosphothreonine (Thr389). Lys396 is covalently cross-linked (Glycyl lysine isopeptide (Lys-Gly) (interchain with G-Cter in SUMO2)).

This sequence belongs to the SLX4IP family. Interacts with SLX4/BTBD12; subunit of different structure-specific endonucleases.

In Mus musculus (Mouse), this protein is Protein SLX4IP (Slx4ip).